The sequence spans 193 residues: dCTP deaminase (193 aa).

Residues 110-115 (RSSLAR), Asp128, 136-138 (VLE), Tyr171, Lys178, and Gln182 contribute to the dCTP site. The active-site Proton donor/acceptor is Glu138.

Belongs to the dCTP deaminase family. Homotrimer.

It carries out the reaction dCTP + H2O + H(+) = dUTP + NH4(+). Its pathway is pyrimidine metabolism; dUMP biosynthesis; dUMP from dCTP (dUTP route): step 1/2. In terms of biological role, catalyzes the deamination of dCTP to dUTP. This is dCTP deaminase from Escherichia coli (strain K12 / MC4100 / BW2952).